The primary structure comprises 223 residues: DNA mismatch repair protein MutH (223 aa).

It belongs to the MutH family.

It is found in the cytoplasm. Sequence-specific endonuclease that cleaves unmethylated GATC sequences. It is involved in DNA mismatch repair. The chain is DNA mismatch repair protein MutH from Haemophilus influenzae (strain ATCC 51907 / DSM 11121 / KW20 / Rd).